The sequence spans 293 residues: NAD kinase (293 aa).

Asp72 (proton acceptor) is an active-site residue. NAD(+) is bound by residues 72 to 73 (DG), 146 to 147 (ND), Arg157, Arg174, Asp176, 187 to 192 (TAYALS), and Gln247.

It belongs to the NAD kinase family. It depends on a divalent metal cation as a cofactor.

Its subcellular location is the cytoplasm. It catalyses the reaction NAD(+) + ATP = ADP + NADP(+) + H(+). Involved in the regulation of the intracellular balance of NAD and NADP, and is a key enzyme in the biosynthesis of NADP. Catalyzes specifically the phosphorylation on 2'-hydroxyl of the adenosine moiety of NAD to yield NADP. The chain is NAD kinase from Teredinibacter turnerae (strain ATCC 39867 / T7901).